Reading from the N-terminus, the 173-residue chain is T cell receptor gamma constant 1 (173 aa).

The 95-residue stretch at 10 to 104 (PKPTIFLPSI…NKNGVDQEII (95 aa)) folds into the Ig-like domain. The cysteines at positions 32 and 88 are disulfide-linked. N-linked (GlcNAc...) asparagine glycans are attached at residues Asn-66, Asn-120, Asn-126, and Asn-135. Residues 139–161 (YYMYLLLLLKSVVYFAIITCCLL) traverse the membrane as a helical segment.

Gamma-delta TR is a heterodimer composed of a gamma and delta chain; disulfide-linked. The gamma-delta TR is associated with the transmembrane signaling CD3 coreceptor proteins following the stoichiometry: a single gamma-delta TR heterodimer associates with one CD3D-CD3E heterodimer, one CD3G-CD3E heterodimer and one CD247 homodimer forming a stable octameric structure. Upon activation, gamma-delta TR complex associates with FCER1G to initiate intracellular signaling.

It is found in the cell membrane. In terms of biological role, constant region of T cell receptor (TR) gamma chain that participates in the antigen recognition. Gamma-delta TRs recognize a variety of self and foreign non-peptide antigens frequently expressed at the epithelial boundaries between the host and external environment, including endogenous lipids presented by MH-like protein CD1D and phosphoantigens presented by butyrophilin-like molecule BTN3A1. Upon antigen recognition induces rapid, innate-like immune responses involved in pathogen clearance and tissue repair. Binding of gamma-delta TR complex to antigen triggers phosphorylation of immunoreceptor tyrosine-based activation motifs (ITAMs) in the CD3 chains by the LCK and FYN kinases, allowing the recruitment, phosphorylation, and activation of ZAP70 that facilitates phosphorylation of the scaffolding proteins LCP2 and LAT. This lead to the formation of a supramolecular signalosome that recruits the phospholipase PLCG1, resulting in calcium mobilization and ERK activation, ultimately leading to T cell expansion and differentiation into effector cells. Gamma-delta TRs are produced through somatic rearrangement of a limited repertoire of variable (V), diversity (D), and joining (J) genes. The potential diversity of gamma-delta TRs is conferred by the unique ability to rearrange (D) genes in tandem and to utilize all three reading frames. The combinatorial diversity is considerably increased by the sequence exonuclease trimming and random nucleotide (N) region additions which occur during the V-(D)-J rearrangements. The polypeptide is T cell receptor gamma constant 1 (Homo sapiens (Human)).